We begin with the raw amino-acid sequence, 305 residues long: Protoheme IX farnesyltransferase (305 aa).

9 consecutive transmembrane segments (helical) span residues phenylalanine 38–glycine 58, leucine 60–isoleucine 80, alanine 110–valine 130, threonine 131–serine 151, isoleucine 161–isoleucine 181, alanine 185–isoleucine 205, valine 227–glycine 247, leucine 249–leucine 269, and phenylalanine 285–phenylalanine 305.

This sequence belongs to the UbiA prenyltransferase family. Protoheme IX farnesyltransferase subfamily. As to quaternary structure, interacts with CtaA.

The protein localises to the cell membrane. The enzyme catalyses heme b + (2E,6E)-farnesyl diphosphate + H2O = Fe(II)-heme o + diphosphate. Its pathway is porphyrin-containing compound metabolism; heme O biosynthesis; heme O from protoheme: step 1/1. In terms of biological role, converts heme B (protoheme IX) to heme O by substitution of the vinyl group on carbon 2 of heme B porphyrin ring with a hydroxyethyl farnesyl side group. In Bacillus pumilus (strain SAFR-032), this protein is Protoheme IX farnesyltransferase.